The primary structure comprises 417 residues: Serine hydroxymethyltransferase (417 aa).

(6S)-5,6,7,8-tetrahydrofolate is bound by residues leucine 112 and 116–118 (GHL). Residue lysine 221 is modified to N6-(pyridoxal phosphate)lysine. Residue glutamate 247 coordinates (6S)-5,6,7,8-tetrahydrofolate.

Belongs to the SHMT family. As to quaternary structure, homodimer. It depends on pyridoxal 5'-phosphate as a cofactor.

Its subcellular location is the cytoplasm. It carries out the reaction (6R)-5,10-methylene-5,6,7,8-tetrahydrofolate + glycine + H2O = (6S)-5,6,7,8-tetrahydrofolate + L-serine. The protein operates within one-carbon metabolism; tetrahydrofolate interconversion. It functions in the pathway amino-acid biosynthesis; glycine biosynthesis; glycine from L-serine: step 1/1. In terms of biological role, catalyzes the reversible interconversion of serine and glycine with tetrahydrofolate (THF) serving as the one-carbon carrier. This reaction serves as the major source of one-carbon groups required for the biosynthesis of purines, thymidylate, methionine, and other important biomolecules. Also exhibits THF-independent aldolase activity toward beta-hydroxyamino acids, producing glycine and aldehydes, via a retro-aldol mechanism. This Borrelia duttonii (strain Ly) protein is Serine hydroxymethyltransferase.